Consider the following 279-residue polypeptide: NADPH-dependent 7-cyano-7-deazaguanine reductase (279 aa).

86–88 (IES) contacts substrate. 88–89 (SK) is a binding site for NADPH. C187 (thioimide intermediate) is an active-site residue. The Proton donor role is filled by D194. 226–227 (HE) contributes to the substrate binding site. Position 255–256 (255–256 (RG)) interacts with NADPH.

Belongs to the GTP cyclohydrolase I family. QueF type 2 subfamily. As to quaternary structure, homodimer.

The protein resides in the cytoplasm. It catalyses the reaction 7-aminomethyl-7-carbaguanine + 2 NADP(+) = 7-cyano-7-deazaguanine + 2 NADPH + 3 H(+). It participates in tRNA modification; tRNA-queuosine biosynthesis. In terms of biological role, catalyzes the NADPH-dependent reduction of 7-cyano-7-deazaguanine (preQ0) to 7-aminomethyl-7-deazaguanine (preQ1). This chain is NADPH-dependent 7-cyano-7-deazaguanine reductase, found in Haemophilus ducreyi (strain 35000HP / ATCC 700724).